The following is a 2144-amino-acid chain: Alpha-protein kinase 2 (2144 aa).

The Ig-like 1 domain occupies 7 to 105 (PERRTLCFLS…ICCSASLEVQ (99 aa)). An intrachain disulfide couples Cys33 to Cys98. Disordered stretches follow at residues 425–473 (ETAK…LQTM), 500–575 (SLAR…GAPG), 727–775 (EDNE…NVGS), 845–864 (QTQG…DGKS), 881–907 (EASE…TLPY), 1011–1065 (SCEA…PEGQ), 1316–1340 (DPVE…EMEM), 1471–1509 (GPGE…ETEV), 1565–1587 (CGNH…PKGN), 1629–1696 (ECES…GSGH), and 1720–1754 (ENSR…PCKA). A compositionally biased stretch (basic and acidic residues) spans 500 to 511 (SLARERTDEKYP). Residues 853-864 (RSTDKRSQDGKS) are compositionally biased toward basic and acidic residues. Positions 897 to 906 (PPSTFSSTLP) are enriched in polar residues. The segment covering 1574–1587 (DLTNTPCTSSPKGN) has biased composition (polar residues). Composition is skewed to basic and acidic residues over residues 1631-1645 (ESEK…RDPC) and 1732-1754 (PKFE…PCKA). One can recognise an Ig-like 2 domain in the interval 1759 to 1847 (PVLLKRIQAE…GKVTAEFNLT (89 aa)). Cys1781 and Cys1831 are oxidised to a cystine. The 233-residue stretch at 1874–2106 (KEDVFNDSYF…YCKMLGLKSL (233 aa)) folds into the Alpha-type protein kinase domain. Positions 2109–2144 (NSQKPKKPIVGKGRVPTNATQVKTPESETPPAERKT) are disordered.

Belongs to the protein kinase superfamily. Alpha-type protein kinase family. ALPK subfamily.

Its subcellular location is the basolateral cell membrane. It carries out the reaction L-seryl-[protein] + ATP = O-phospho-L-seryl-[protein] + ADP + H(+). The catalysed reaction is L-threonyl-[protein] + ATP = O-phospho-L-threonyl-[protein] + ADP + H(+). Functionally, protein kinase that recognizes phosphorylation sites in which the surrounding peptides have an alpha-helical conformation. Regulates cardiac development and cardiomyocyte differentiation by negatively regulating Wnt/beta-catenin signaling. The sequence is that of Alpha-protein kinase 2 from Mus musculus (Mouse).